A 486-amino-acid polypeptide reads, in one-letter code: UDP-N-acetylmuramate--L-alanine ligase (486 aa).

Residue 126–132 (GTHGKTS) participates in ATP binding.

This sequence belongs to the MurCDEF family.

Its subcellular location is the cytoplasm. The catalysed reaction is UDP-N-acetyl-alpha-D-muramate + L-alanine + ATP = UDP-N-acetyl-alpha-D-muramoyl-L-alanine + ADP + phosphate + H(+). It functions in the pathway cell wall biogenesis; peptidoglycan biosynthesis. Its function is as follows. Cell wall formation. This is UDP-N-acetylmuramate--L-alanine ligase from Corynebacterium glutamicum (strain R).